The primary structure comprises 22 residues: Leptoglycin (22 aa).

The segment at 1-22 (GLLGGLLGPLLGGGGGGGGGLL) is disordered.

Expressed by the skin glands.

It is found in the secreted. Functionally, antimicrobial protein. Has antibacterial activity against the Gram-negative bacteria E.coli ATCC 28922 (MIC=50 uM), P.aeruginosa ATCC 9027 (MIC=8 uM) and C.freundii ATCC 8090 (MIC=75 uM). Does not have hemolytic activity. The sequence is that of Leptoglycin from Leptodactylus pentadactylus (Smokey jungle frog).